A 444-amino-acid polypeptide reads, in one-letter code: Phosphoglucosamine mutase (444 aa).

The active-site Phosphoserine intermediate is the serine 104. Residues serine 104, aspartate 243, aspartate 245, and aspartate 247 each coordinate Mg(2+). Position 104 is a phosphoserine (serine 104).

Belongs to the phosphohexose mutase family. Mg(2+) is required as a cofactor. Post-translationally, activated by phosphorylation.

The catalysed reaction is alpha-D-glucosamine 1-phosphate = D-glucosamine 6-phosphate. Functionally, catalyzes the conversion of glucosamine-6-phosphate to glucosamine-1-phosphate. This Neisseria meningitidis serogroup B (strain ATCC BAA-335 / MC58) protein is Phosphoglucosamine mutase.